The primary structure comprises 207 residues: Octanoyltransferase (207 aa).

In terms of domain architecture, BPL/LPL catalytic spans 27–203 (ADTEDELWVV…HLETQFTPKA (177 aa)). Residues 66–73 (RGGQITYH), 133–135 (SLG), and 146–148 (GLA) contribute to the substrate site. Cysteine 164 functions as the Acyl-thioester intermediate in the catalytic mechanism.

This sequence belongs to the LipB family.

It localises to the cytoplasm. The catalysed reaction is octanoyl-[ACP] + L-lysyl-[protein] = N(6)-octanoyl-L-lysyl-[protein] + holo-[ACP] + H(+). It participates in protein modification; protein lipoylation via endogenous pathway; protein N(6)-(lipoyl)lysine from octanoyl-[acyl-carrier-protein]: step 1/2. Its function is as follows. Catalyzes the transfer of endogenously produced octanoic acid from octanoyl-acyl-carrier-protein onto the lipoyl domains of lipoate-dependent enzymes. Lipoyl-ACP can also act as a substrate although octanoyl-ACP is likely to be the physiological substrate. This chain is Octanoyltransferase, found in Neisseria meningitidis serogroup A / serotype 4A (strain DSM 15465 / Z2491).